Reading from the N-terminus, the 190-residue chain is Threonylcarbamoyl-AMP synthase (190 aa).

The region spanning 7 to 190 is the YrdC-like domain; sequence IGSIAAAVDL…ALTGELFRQG (184 aa).

This sequence belongs to the SUA5 family. TsaC subfamily.

The protein localises to the cytoplasm. The enzyme catalyses L-threonine + hydrogencarbonate + ATP = L-threonylcarbamoyladenylate + diphosphate + H2O. Its function is as follows. Required for the formation of a threonylcarbamoyl group on adenosine at position 37 (t(6)A37) in tRNAs that read codons beginning with adenine. Catalyzes the conversion of L-threonine, HCO(3)(-)/CO(2) and ATP to give threonylcarbamoyl-AMP (TC-AMP) as the acyladenylate intermediate, with the release of diphosphate. The polypeptide is Threonylcarbamoyl-AMP synthase (Salmonella typhimurium (strain LT2 / SGSC1412 / ATCC 700720)).